The sequence spans 195 residues: dTTP/UTP pyrophosphatase (195 aa).

Asp-73 (proton acceptor) is an active-site residue.

Belongs to the Maf family. YhdE subfamily. It depends on a divalent metal cation as a cofactor.

It is found in the cytoplasm. It catalyses the reaction dTTP + H2O = dTMP + diphosphate + H(+). The enzyme catalyses UTP + H2O = UMP + diphosphate + H(+). Nucleoside triphosphate pyrophosphatase that hydrolyzes dTTP and UTP. May have a dual role in cell division arrest and in preventing the incorporation of modified nucleotides into cellular nucleic acids. The sequence is that of dTTP/UTP pyrophosphatase from Exiguobacterium sibiricum (strain DSM 17290 / CCUG 55495 / CIP 109462 / JCM 13490 / 255-15).